The primary structure comprises 889 residues: Valine--tRNA ligase (889 aa).

A 'HIGH' region motif is present at residues 50–60; the sequence is PNVTGKLHLGH. The 'KMSKS' region motif lies at 532–536; it reads KMSKS. K535 provides a ligand contact to ATP. Residues 816 to 889 are a coiled coil; that stretch reads LAELVDLDEE…QRLVDIKAEA (74 aa).

The protein belongs to the class-I aminoacyl-tRNA synthetase family. ValS type 1 subfamily. Monomer.

It is found in the cytoplasm. The enzyme catalyses tRNA(Val) + L-valine + ATP = L-valyl-tRNA(Val) + AMP + diphosphate. Its function is as follows. Catalyzes the attachment of valine to tRNA(Val). As ValRS can inadvertently accommodate and process structurally similar amino acids such as threonine, to avoid such errors, it has a 'posttransfer' editing activity that hydrolyzes mischarged Thr-tRNA(Val) in a tRNA-dependent manner. In Lactiplantibacillus plantarum (strain ATCC BAA-793 / NCIMB 8826 / WCFS1) (Lactobacillus plantarum), this protein is Valine--tRNA ligase.